Here is a 360-residue protein sequence, read N- to C-terminus: Dihydroorotate dehydrogenase (quinone) (360 aa).

Residues 65 to 69 (AGLDK) and T89 contribute to the FMN site. K69 contributes to the substrate binding site. 114–118 (NRLGF) contacts substrate. Residues N147 and N180 each contribute to the FMN site. Substrate is bound at residue N180. Catalysis depends on S183, which acts as the Nucleophile. N185 lines the substrate pocket. K225 and T253 together coordinate FMN. Residue 254–255 (NT) participates in substrate binding. FMN is bound by residues G276, G305, and 326–327 (YT).

It belongs to the dihydroorotate dehydrogenase family. Type 2 subfamily. As to quaternary structure, monomer. The cofactor is FMN.

The protein resides in the cell membrane. It catalyses the reaction (S)-dihydroorotate + a quinone = orotate + a quinol. It functions in the pathway pyrimidine metabolism; UMP biosynthesis via de novo pathway; orotate from (S)-dihydroorotate (quinone route): step 1/1. In terms of biological role, catalyzes the conversion of dihydroorotate to orotate with quinone as electron acceptor. The chain is Dihydroorotate dehydrogenase (quinone) from Verminephrobacter eiseniae (strain EF01-2).